The primary structure comprises 166 residues: NAD(P)H-quinone oxidoreductase subunit I, chloroplastic (166 aa).

2 consecutive 4Fe-4S ferredoxin-type domains span residues 55–84 (GRIH…VDWK) and 95–124 (LNYS…MTEE). Cys64, Cys67, Cys70, Cys74, Cys104, Cys107, Cys110, and Cys114 together coordinate [4Fe-4S] cluster.

This sequence belongs to the complex I 23 kDa subunit family. As to quaternary structure, NDH is composed of at least 16 different subunits, 5 of which are encoded in the nucleus. The cofactor is [4Fe-4S] cluster.

The protein localises to the plastid. It localises to the chloroplast thylakoid membrane. The catalysed reaction is a plastoquinone + NADH + (n+1) H(+)(in) = a plastoquinol + NAD(+) + n H(+)(out). It carries out the reaction a plastoquinone + NADPH + (n+1) H(+)(in) = a plastoquinol + NADP(+) + n H(+)(out). Its function is as follows. NDH shuttles electrons from NAD(P)H:plastoquinone, via FMN and iron-sulfur (Fe-S) centers, to quinones in the photosynthetic chain and possibly in a chloroplast respiratory chain. The immediate electron acceptor for the enzyme in this species is believed to be plastoquinone. Couples the redox reaction to proton translocation, and thus conserves the redox energy in a proton gradient. This is NAD(P)H-quinone oxidoreductase subunit I, chloroplastic from Pericome caudata (Mountain tail-leaf).